A 459-amino-acid polypeptide reads, in one-letter code: Elongation factor 1-alpha (459 aa).

G2 carries the post-translational modification N,N,N-trimethylglycine. K3 carries the post-translational modification N6,N6-dimethyllysine; alternate. At K3 the chain carries N6-methyllysine; alternate. The 235-residue stretch at 5–239 folds into the tr-type G domain; it reads KSHINVVVIG…DAIDPPSRPT (235 aa). The tract at residues 14–21 is G1; it reads GHVDSGKS. 14-21 serves as a coordination point for GTP; it reads GHVDSGKS. K30 carries the N6-methyllysine modification. The G2 stretch occupies residues 70–74; it reads GITID. K79 is modified (N6,N6,N6-trimethyllysine). A G3 region spans residues 91-94; that stretch reads DAPG. GTP contacts are provided by residues 91–95 and 153–156; these read DAPGH and NKMD. The segment at 153 to 156 is G4; it reads NKMD. A G5 region spans residues 192 to 194; sequence SGF. K315 is modified (N6,N6-dimethyllysine; alternate). K315 carries the post-translational modification N6-methyllysine; alternate. K389 is modified (N6-methyllysine).

Belongs to the TRAFAC class translation factor GTPase superfamily. Classic translation factor GTPase family. EF-Tu/EF-1A subfamily.

Its subcellular location is the cytoplasm. This protein promotes the GTP-dependent binding of aminoacyl-tRNA to the A-site of ribosomes during protein biosynthesis. The protein is Elongation factor 1-alpha (TEF1) of Aureobasidium pullulans (Black yeast).